The chain runs to 157 residues: Endoribonuclease YbeY (157 aa).

Zn(2+)-binding residues include H122, H126, and H132.

This sequence belongs to the endoribonuclease YbeY family. Zn(2+) is required as a cofactor.

The protein localises to the cytoplasm. Functionally, single strand-specific metallo-endoribonuclease involved in late-stage 70S ribosome quality control and in maturation of the 3' terminus of the 16S rRNA. The sequence is that of Endoribonuclease YbeY from Bacillus subtilis (strain 168).